The following is a 359-amino-acid chain: MAINTDTSGKQKALTMVLNQIERSFGKGAIMRLGDATRMRVETISSGALTLDLALGGGLPKGRVIEIYGPESSGKTTVALHALAEVQRNGGIAAFVDAEHALDPTYAAALGVDIDNLLISQPDTGESALEIVDQLVRSAAVDIVVIDSVAALVPRAEIEGDMGDAHVGLQARLMSQALRKITGNIGKSGCTVIFINQLRQKIGVTYGSPETTTGGNALKFYASVRLDIRRIQTLKKGTDEYGNRVKVKVAKNKVAPPFRIAEFDIIFGKGISTLGCVVDLAEETGIIIRKGAWYSYNGDNISQGRDNAIKYLEEKPEFAEEIKKLVREKLDKGAVVSANSVAKASEEDEEEEVDLEPEE.

69–76 contributes to the ATP binding site; sequence GPESSGKT. The tract at residues 337–359 is disordered; it reads SANSVAKASEEDEEEEVDLEPEE. Acidic residues predominate over residues 346 to 359; that stretch reads EEDEEEEVDLEPEE.

The protein belongs to the RecA family.

It is found in the cytoplasm. In terms of biological role, can catalyze the hydrolysis of ATP in the presence of single-stranded DNA, the ATP-dependent uptake of single-stranded DNA by duplex DNA, and the ATP-dependent hybridization of homologous single-stranded DNAs. It interacts with LexA causing its activation and leading to its autocatalytic cleavage. This is Protein RecA from Nostoc punctiforme (strain ATCC 29133 / PCC 73102).